Reading from the N-terminus, the 73-residue chain is MKANIHPEYHKIKVVMTDGTEYETFSTWGTEGQVMNLDIDSKSHPAWTGGNQQLMDRGGRLSKFNKRFGGLGL.

The protein belongs to the bacterial ribosomal protein bL31 family. Type A subfamily. Part of the 50S ribosomal subunit.

Binds the 23S rRNA. The polypeptide is Large ribosomal subunit protein bL31 (Allorhizobium ampelinum (strain ATCC BAA-846 / DSM 112012 / S4) (Agrobacterium vitis (strain S4))).